Consider the following 229-residue polypeptide: Dephospho-CoA kinase domain-containing protein (229 aa).

In terms of domain architecture, DPCK spans 3-207; the sequence is LVGLTGGIAS…DCMQFLIIRA (205 aa). An ATP-binding site is contributed by 8–15; the sequence is GGIASGKS.

It belongs to the CoaE family.

The chain is Dephospho-CoA kinase domain-containing protein (dcakd) from Danio rerio (Zebrafish).